The sequence spans 166 residues: Sec-independent protein translocase protein TatB (166 aa).

A helical membrane pass occupies residues 2 to 22; sequence FNDIGALELLTLGVLAVLVFG. Residues 110-166 are disordered; it reads TPAASDTANSAVNGSAGAAADGVTTSLTKTGETTPDLLKKAPQQAQPERPPFDADAT. A compositionally biased stretch (low complexity) spans 117–129; that stretch reads ANSAVNGSAGAAA. Residues 132–142 are compositionally biased toward polar residues; the sequence is VTTSLTKTGET.

Belongs to the TatB family. As to quaternary structure, the Tat system comprises two distinct complexes: a TatABC complex, containing multiple copies of TatA, TatB and TatC subunits, and a separate TatA complex, containing only TatA subunits. Substrates initially bind to the TatABC complex, which probably triggers association of the separate TatA complex to form the active translocon.

It localises to the cell membrane. Functionally, part of the twin-arginine translocation (Tat) system that transports large folded proteins containing a characteristic twin-arginine motif in their signal peptide across membranes. Together with TatC, TatB is part of a receptor directly interacting with Tat signal peptides. TatB may form an oligomeric binding site that transiently accommodates folded Tat precursor proteins before their translocation. This Streptomyces griseus subsp. griseus (strain JCM 4626 / CBS 651.72 / NBRC 13350 / KCC S-0626 / ISP 5235) protein is Sec-independent protein translocase protein TatB.